The chain runs to 784 residues: LPS-assembly protein LptD (784 aa).

The signal sequence occupies residues 1 to 24; the sequence is MKKRIPTLLATMIATALYSQQGLA. 2 disulfide bridges follow: Cys-31–Cys-724 and Cys-173–Cys-725.

The protein belongs to the LptD family. In terms of assembly, component of the lipopolysaccharide transport and assembly complex. Interacts with LptE and LptA. Contains two intramolecular disulfide bonds.

It localises to the cell outer membrane. Together with LptE, is involved in the assembly of lipopolysaccharide (LPS) at the surface of the outer membrane. The polypeptide is LPS-assembly protein LptD (Shigella dysenteriae serotype 1 (strain Sd197)).